The following is a 433-amino-acid chain: Ribosomal protein uS12 methylthiotransferase RimO (433 aa).

The MTTase N-terminal domain occupies 6–122; the sequence is QSIFLLSLGC…IISVLGGSYR (117 aa). [4Fe-4S] cluster contacts are provided by Cys-15, Cys-51, Cys-85, Cys-146, Cys-150, and Cys-153. Positions 132-362 constitute a Radical SAM core domain; sequence LTPPHYAWLK…MELQESIAAE (231 aa). Residues 365-432 enclose the TRAM domain; sequence RELEGRVMKV…AYELHGRVND (68 aa).

Belongs to the methylthiotransferase family. RimO subfamily. [4Fe-4S] cluster is required as a cofactor.

The protein localises to the cytoplasm. The enzyme catalyses L-aspartate(89)-[ribosomal protein uS12]-hydrogen + (sulfur carrier)-SH + AH2 + 2 S-adenosyl-L-methionine = 3-methylsulfanyl-L-aspartate(89)-[ribosomal protein uS12]-hydrogen + (sulfur carrier)-H + 5'-deoxyadenosine + L-methionine + A + S-adenosyl-L-homocysteine + 2 H(+). Catalyzes the methylthiolation of an aspartic acid residue of ribosomal protein uS12. This chain is Ribosomal protein uS12 methylthiotransferase RimO, found in Prosthecochloris aestuarii (strain DSM 271 / SK 413).